Here is a 274-residue protein sequence, read N- to C-terminus: Probable cyclic nucleotide phosphodiesterase RPA0124 (274 aa).

The Fe cation site is built by Asp8, His10, Asp49, Asn79, His155, His194, and His196. AMP-binding positions include His10, Asp49, and 79 to 80 (NH). His196 lines the AMP pocket.

Belongs to the cyclic nucleotide phosphodiesterase class-III family. Requires Fe(2+) as cofactor.

The sequence is that of Probable cyclic nucleotide phosphodiesterase RPA0124 from Rhodopseudomonas palustris (strain ATCC BAA-98 / CGA009).